The following is a 368-amino-acid chain: Spermidine/putrescine import ATP-binding protein PotA (368 aa).

The 231-residue stretch at 8–238 (IELKNVSKIF…PVNLFVARFV (231 aa)) folds into the ABC transporter domain. 40–47 (GPSGCGKT) provides a ligand contact to ATP.

This sequence belongs to the ABC transporter superfamily. Spermidine/putrescine importer (TC 3.A.1.11.1) family. The complex is composed of two ATP-binding proteins (PotA), two transmembrane proteins (PotB and PotC) and a solute-binding protein (PotD).

Its subcellular location is the cell membrane. It carries out the reaction ATP + H2O + polyamine-[polyamine-binding protein]Side 1 = ADP + phosphate + polyamineSide 2 + [polyamine-binding protein]Side 1.. Functionally, part of the ABC transporter complex PotABCD involved in spermidine/putrescine import. Responsible for energy coupling to the transport system. This is Spermidine/putrescine import ATP-binding protein PotA from Lawsonia intracellularis (strain PHE/MN1-00).